A 414-amino-acid chain; its full sequence is Isocitrate dehydrogenase [NADP] cytoplasmic (414 aa).

At S2 the chain carries N-acetylserine. Y42 is subject to Phosphotyrosine. An NADP(+)-binding site is contributed by 75-77 (TIT). T77 provides a ligand contact to substrate. K81 bears the N6-acetyllysine mark. Residue R82 participates in NADP(+) binding. Substrate is bound by residues 94 to 100 (SPNGTIR) and R109. K126 is subject to N6-succinyllysine. Residues R132 and K212 each coordinate substrate. N6-acetyllysine is present on residues K224, K233, and K243. Residue D252 participates in Mn(2+) binding. Position 260 (K260) interacts with NADP(+). Mn(2+)-binding residues include D275 and D279. 310-315 (GTVTRH) is a binding site for NADP(+). At K321 the chain carries N6-acetyllysine. N328 contacts NADP(+). S389 is subject to Phosphoserine. K400 carries the post-translational modification N6-succinyllysine.

It belongs to the isocitrate and isopropylmalate dehydrogenases family. As to quaternary structure, homodimer. Mg(2+) is required as a cofactor. Mn(2+) serves as cofactor. In terms of processing, acetylation at Lys-374 dramatically reduces catalytic activity.

It localises to the cytoplasm. The protein localises to the cytosol. The catalysed reaction is D-threo-isocitrate + NADP(+) = 2-oxoglutarate + CO2 + NADPH. In terms of biological role, catalyzes the NADP(+)-dependent oxidative decarboxylation of isocitrate (D-threo-isocitrate) to 2-ketoglutarate (2-oxoglutarate), which is required by other enzymes such as the phytanoyl-CoA dioxygenase. Plays a critical role in the generation of NADPH, an important cofactor in many biosynthesis pathways. May act as a corneal epithelial crystallin and may be involved in maintaining corneal epithelial transparency. The polypeptide is Isocitrate dehydrogenase [NADP] cytoplasmic (IDH1) (Microtus mexicanus (Mexican vole)).